The sequence spans 392 residues: Chalcone synthase 1 (392 aa).

Cys-167 is a catalytic residue.

It belongs to the thiolase-like superfamily. Chalcone/stilbene synthases family.

It catalyses the reaction (E)-4-coumaroyl-CoA + 3 malonyl-CoA + 3 H(+) = 2',4,4',6'-tetrahydroxychalcone + 3 CO2 + 4 CoA. It participates in secondary metabolite biosynthesis; flavonoid biosynthesis. In terms of biological role, the primary product of this enzyme is 4,2',4',6'-tetrahydroxychalcone (also termed naringenin-chalcone or chalcone) which can under specific conditions spontaneously isomerize into naringenin. This is Chalcone synthase 1 (CHS1) from Secale cereale (Rye).